Consider the following 319-residue polypeptide: Olfactory receptor 10Q1 (319 aa).

Over 1–29 (MPVGKLVFNQSEPTEFVFRAFTTATEFQV) the chain is Extracellular. Asparagine 9 carries an N-linked (GlcNAc...) asparagine glycan. A helical transmembrane segment spans residues 30 to 50 (LLFLLFLLLYLMILCGNTAII). The Cytoplasmic portion of the chain corresponds to 51–58 (WVVCTHST). A helical membrane pass occupies residues 59–79 (LRTPMYFFLSNLSFLELCYTT). Over 80 to 103 (VVVPLMLSNILGAQKPISLAGCGA) the chain is Extracellular. Cysteines 101 and 194 form a disulfide. The helical transmembrane segment at 104–124 (QMFFFVTLGSTDCFLLAIMAY) threads the bilayer. Residues 125 to 143 (DRYVAICHPLHYTLIMTRE) are Cytoplasmic-facing. Residues 144–164 (LCTQMLGGALGLALFPSLQLT) form a helical membrane-spanning segment. The Extracellular portion of the chain corresponds to 165–202 (ALIFTLPFCGHHQEINHFLCDVPPVLRLACADIRVHQA). A helical membrane pass occupies residues 203–222 (VLYVVSILVLTIPFLLICVS). Topologically, residues 223-242 (YVFITCAILSIRSAEGRRRA) are cytoplasmic. A helical transmembrane segment spans residues 243–263 (FSTCSFHLTVVLLQYGCCSLV). Residues 264–276 (YLRPRSSTSEDED) lie on the Extracellular side of the membrane. A helical transmembrane segment spans residues 277–297 (SQIALVYTFVTPLLNPLLYSL). Residues 298–319 (RNKDVKGALRSAIIRKAASDAN) lie on the Cytoplasmic side of the membrane.

It belongs to the G-protein coupled receptor 1 family.

The protein resides in the cell membrane. Its function is as follows. Odorant receptor. The sequence is that of Olfactory receptor 10Q1 (OR10Q1) from Homo sapiens (Human).